A 283-amino-acid chain; its full sequence is MKQYLGLCQRIVDKGIWIENQRTGKRCLTVINADLEYDVGNNQFPMITTRKSFYKSAIAELIGYLRGYDNAADFRKLGTKTWDANSNLNNAWLNNPYRKGEDDMGRVYGIQGRSWAKPDGGFIDQLKKVVDDLSNGIDDRGEIVTFYNPGEFEMGCLRPCMHTHTFSLLGDTLHLTSYQRSCDVPLGLNFNQVQVFALLALMAQITGKKAGMAYHKIVNAHIYEDQLALMRDVQLPRLPFASPQLKINPKIKSLQDLETWVTMDDFEVEGYQCHDAIKYPFSV.

Arg-22 provides a ligand contact to dUMP. Cys-160 acts as the Nucleophile in catalysis. DUMP-binding positions include 180–183 (RSCD), Asn-191, and 221–223 (HIY). Residue Asp-183 coordinates (6R)-5,10-methylene-5,6,7,8-tetrahydrofolate. Residue Ser-282 participates in (6R)-5,10-methylene-5,6,7,8-tetrahydrofolate binding.

Belongs to the thymidylate synthase family. Bacterial-type ThyA subfamily. As to quaternary structure, homodimer.

Its subcellular location is the cytoplasm. The catalysed reaction is dUMP + (6R)-5,10-methylene-5,6,7,8-tetrahydrofolate = 7,8-dihydrofolate + dTMP. It participates in pyrimidine metabolism; dTTP biosynthesis. Catalyzes the reductive methylation of 2'-deoxyuridine-5'-monophosphate (dUMP) to 2'-deoxythymidine-5'-monophosphate (dTMP) while utilizing 5,10-methylenetetrahydrofolate (mTHF) as the methyl donor and reductant in the reaction, yielding dihydrofolate (DHF) as a by-product. This enzymatic reaction provides an intracellular de novo source of dTMP, an essential precursor for DNA biosynthesis. This chain is Thymidylate synthase, found in Psychromonas ingrahamii (strain DSM 17664 / CCUG 51855 / 37).